A 253-amino-acid chain; its full sequence is Probable transcriptional regulatory protein RC0681 (253 aa).

Residues 1–21 (MAGHSKFKNIQHRKGAQDKKR) form a disordered region.

The protein belongs to the TACO1 family.

The protein localises to the cytoplasm. The protein is Probable transcriptional regulatory protein RC0681 of Rickettsia conorii (strain ATCC VR-613 / Malish 7).